The sequence spans 476 residues: Undecaprenyl-phosphate galactose phosphotransferase (476 aa).

A run of 5 helical transmembrane segments spans residues 15-35 (IFLA…SLGC), 52-72 (LDTR…WFWI), 93-113 (TIVI…WQFS), 115-135 (YVWV…RALT), and 283-303 (FDIV…IYLW). The Cytoplasmic portion of the chain corresponds to 304–476 (YKVTRDGGPA…KVVLRRDGAY (173 aa)).

It belongs to the bacterial sugar transferase family.

Its subcellular location is the cell inner membrane. The enzyme catalyses di-trans,octa-cis-undecaprenyl phosphate + UDP-alpha-D-galactose = alpha-D-galactosyl-di-trans,octa-cis-undecaprenyl diphosphate + UMP. It functions in the pathway bacterial outer membrane biogenesis; LPS O-antigen biosynthesis. In terms of biological role, is responsible for transferring galactose-1-phosphate to the lipid precursor undecaprenol phosphate in the first steps of O-polysaccharide biosynthesis. This Salmonella typhimurium (strain LT2 / SGSC1412 / ATCC 700720) protein is Undecaprenyl-phosphate galactose phosphotransferase (rfbP).